The chain runs to 424 residues: Histidine--tRNA ligase (424 aa).

This sequence belongs to the class-II aminoacyl-tRNA synthetase family. Homodimer.

It localises to the cytoplasm. It carries out the reaction tRNA(His) + L-histidine + ATP = L-histidyl-tRNA(His) + AMP + diphosphate + H(+). The sequence is that of Histidine--tRNA ligase from Marinomonas sp. (strain MWYL1).